The primary structure comprises 390 residues: Protein SOSEKI 4 (390 aa).

A DIX-like oligomerization domain region spans residues 22–115 (RMAEVLYVLS…YALKATKRFD (94 aa)). 2 disordered regions span residues 210 to 247 (KSNS…NRTG) and 291 to 321 (RESN…SGGS). Positions 304-321 (PSVQAETHVSKLSKSGGS) are enriched in polar residues.

This sequence belongs to the SOSEKI family. As to quaternary structure, homodimer. Forms long polymer filaments with other SOKs proteins polymers crucial for polar localization and biological activity.

It is found in the cell membrane. Functionally, SOSEKI proteins locally interpret global polarity cues and can influence cell division orientation to coordinate cell polarization relative to body axes. This Physcomitrium patens (Spreading-leaved earth moss) protein is Protein SOSEKI 4.